Here is a 155-residue protein sequence, read N- to C-terminus: uncharacterized protein (155 aa).

This is an uncharacterized protein from Saccharomyces cerevisiae (strain ATCC 204508 / S288c) (Baker's yeast).